The following is a 326-amino-acid chain: Aspartate carbamoyltransferase catalytic subunit (326 aa).

Residues arginine 58 and threonine 59 each coordinate carbamoyl phosphate. Lysine 86 provides a ligand contact to L-aspartate. Positions 108, 141, and 144 each coordinate carbamoyl phosphate. 2 residues coordinate L-aspartate: arginine 181 and arginine 239. Residues glycine 280 and proline 281 each coordinate carbamoyl phosphate.

Belongs to the aspartate/ornithine carbamoyltransferase superfamily. ATCase family. In terms of assembly, heterododecamer (2C3:3R2) of six catalytic PyrB chains organized as two trimers (C3), and six regulatory PyrI chains organized as three dimers (R2).

The enzyme catalyses carbamoyl phosphate + L-aspartate = N-carbamoyl-L-aspartate + phosphate + H(+). Its pathway is pyrimidine metabolism; UMP biosynthesis via de novo pathway; (S)-dihydroorotate from bicarbonate: step 2/3. Catalyzes the condensation of carbamoyl phosphate and aspartate to form carbamoyl aspartate and inorganic phosphate, the committed step in the de novo pyrimidine nucleotide biosynthesis pathway. The chain is Aspartate carbamoyltransferase catalytic subunit from Synechococcus sp. (strain JA-2-3B'a(2-13)) (Cyanobacteria bacterium Yellowstone B-Prime).